A 172-amino-acid chain; its full sequence is Small ribosomal subunit protein uS5 (172 aa).

The region spanning 15-78 (LNDKLIFINR…ANAKRNLSRI (64 aa)) is the S5 DRBM domain.

It belongs to the universal ribosomal protein uS5 family. Part of the 30S ribosomal subunit. Contacts proteins S4 and S8.

In terms of biological role, with S4 and S12 plays an important role in translational accuracy. Its function is as follows. Located at the back of the 30S subunit body where it stabilizes the conformation of the head with respect to the body. The sequence is that of Small ribosomal subunit protein uS5 from Dehalococcoides mccartyi (strain CBDB1).